The following is a 500-amino-acid chain: Pentatricopeptide repeat-containing protein At1g05750, chloroplastic (500 aa).

Residues 1–54 (MGLLPVVGITSPALITHKNHANPKIQRHNQSTSETTVSWTSRINLLTRNGRLAE) constitute a chloroplast transit peptide. 10 PPR repeats span residues 35–69 (TTVS…GVEP), 70–106 (NHIT…GLDR), 108–138 (HVMV…MEDK), 139–173 (NSVT…DLIS), 174–204 (WTAM…GVKP), 205–239 (DYVA…DFKN), 240–270 (NVRV…MEKR), 271–305 (TVVS…GFKP), 306–336 (DAVT…MKCD), and 342–376 (RIEH…PNEV). The type E motif stretch occupies residues 377-453 (VIGSLLAACS…QPGFSSIEID (77 aa)). Residues 454-484 (DCMHVFMAGDNAHVETTYIREVLELISSDLR) form a type E(+) motif region.

Belongs to the PPR family. PCMP-E subfamily.

It localises to the plastid. The protein resides in the chloroplast. This Arabidopsis thaliana (Mouse-ear cress) protein is Pentatricopeptide repeat-containing protein At1g05750, chloroplastic (PDE247).